Reading from the N-terminus, the 670-residue chain is Small ribosomal subunit protein mS39 (670 aa).

Residues 1-13 constitute a mitochondrion transit peptide; it reads MAAPCVRLGSVRC. PPR repeat units lie at residues 129–163, 164–199, 209–239, 240–274, 275–314, 315–351, 352–392, 396–430, 438–472, 473–507, and 556–590; these read VEGV…GTAP, SLET…EVQD, RPRQ…MPER, NAHS…RLTA, DVQT…NVRP, NLLT…NIEP, SLAT…FTLR, DVYF…DNRG, QSTY…LYYP, NSRG…GHSN, and SAGS…HRVP. The segment at 187–213 is disordered; it reads IQTSEQEQQEVQDQQETEDPKKRPRQY. A compositionally biased stretch (acidic residues) spans 193 to 203; the sequence is EQQEVQDQQET. A disordered region spans residues 648–670; that stretch reads EDLQKSHSSSSSSSSSSSDSDRE. The span at 653-670 shows a compositional bias: low complexity; it reads SHSSSSSSSSSSSDSDRE.

This sequence belongs to the mitochondrion-specific ribosomal protein mS39 family.

It is found in the mitochondrion. In terms of biological role, mitochondrial protein that may have a role in mitochondrial translation. The sequence is that of Small ribosomal subunit protein mS39 (ptcd3) from Xenopus tropicalis (Western clawed frog).